The chain runs to 204 residues: ATP phosphoribosyltransferase (204 aa).

The protein belongs to the ATP phosphoribosyltransferase family. Short subfamily.

The protein resides in the cytoplasm. It catalyses the reaction 1-(5-phospho-beta-D-ribosyl)-ATP + diphosphate = 5-phospho-alpha-D-ribose 1-diphosphate + ATP. The protein operates within amino-acid biosynthesis; L-histidine biosynthesis; L-histidine from 5-phospho-alpha-D-ribose 1-diphosphate: step 1/9. Catalyzes the condensation of ATP and 5-phosphoribose 1-diphosphate to form N'-(5'-phosphoribosyl)-ATP (PR-ATP). Has a crucial role in the pathway because the rate of histidine biosynthesis seems to be controlled primarily by regulation of HisG enzymatic activity. This chain is ATP phosphoribosyltransferase (hisG), found in Pyrococcus furiosus (strain ATCC 43587 / DSM 3638 / JCM 8422 / Vc1).